The sequence spans 520 residues: Glucose-6-phosphate isomerase (520 aa).

The active-site Proton donor is glutamate 327. Residues histidine 358 and lysine 486 contribute to the active site.

The protein belongs to the GPI family.

The protein resides in the cytoplasm. It carries out the reaction alpha-D-glucose 6-phosphate = beta-D-fructose 6-phosphate. Its pathway is carbohydrate biosynthesis; gluconeogenesis. It functions in the pathway carbohydrate degradation; glycolysis; D-glyceraldehyde 3-phosphate and glycerone phosphate from D-glucose: step 2/4. Its function is as follows. Catalyzes the reversible isomerization of glucose-6-phosphate to fructose-6-phosphate. This is Glucose-6-phosphate isomerase from Bordetella avium (strain 197N).